The primary structure comprises 569 residues: Sialic acid-binding Ig-like lectin 5 (569 aa).

An N-terminal signal peptide occupies residues 1-16 (MRWAWLLPLLWAGCLA). The Extracellular segment spans residues 17-439 (TDGYSLSVTG…KSETSRGTVL (423 aa)). Positions 18–116 (DGYSLSVTGS…DTGTYFFRLD (99 aa)) constitute an Ig-like V-type domain. 4 cysteine pairs are disulfide-bonded: Cys-35–Cys-163, Cys-40–Cys-96, Cys-157–Cys-206, and Cys-265–Cys-308. Asn-95 carries N-linked (GlcNAc...) asparagine glycosylation. 3 residues coordinate N-acetylneuraminate: Arg-114, Lys-120, and Ser-122. 2 Ig-like C2-type domains span residues 139-224 (PNIQ…QQLS) and 229-324 (PQKM…VSLS). Residues Asn-151, Asn-200, and Asn-203 are each glycosylated (N-linked (GlcNAc...) asparagine). 3 N-linked (GlcNAc...) asparagine glycosylation sites follow: Asn-369, Asn-372, and Asn-387. Residues 440 to 460 (GAIWGAGLMALLAVCLCLIFF) traverse the membrane as a helical segment. The Cytoplasmic portion of the chain corresponds to 461 to 569 (TVKVLRKKSA…VYTEIKIHKC (109 aa)). The segment at 508–556 (HLNEPGSQTQKEQPPLATVPDTQKDEPELHYASLSFQGPMPPKPQNTEA) is disordered. The ITIM motif motif lies at 536–541 (LHYASL). Positions 559-564 (SVYTEI) match the SLAM-like motif motif.

Belongs to the immunoglobulin superfamily. SIGLEC (sialic acid binding Ig-like lectin) family. Predominantly expressed by immature monocytic/myeloid lineage cells in bone marrow. Also found at lower levels in mature neutrophils and monocytes.

The protein resides in the membrane. In terms of biological role, putative adhesion molecule that mediates sialic-acid dependent binding to cells. Preferentially binds to alpha-2,3-linked sialic acid. The sialic acid recognition site may be masked by cis interactions with sialic acids on the same cell surface. The sequence is that of Sialic acid-binding Ig-like lectin 5 (Siglec5) from Mus musculus (Mouse).